We begin with the raw amino-acid sequence, 1320 residues long: Tetratricopeptide repeat protein 21A (1320 aa).

TPR repeat units follow at residues 4-38, 110-143, 146-180, 181-213, 215-247, 334-367, 502-534, 572-605, 728-761, 762-795, 797-828, 837-869, 889-922, 924-956, 957-990, 1028-1061, 1201-1234, 1236-1268, and 1270-1303; these read NDSS…FSND, GTAL…SRGF, AYVL…TKDV, LGLM…SGSF, PALV…DESN, VHVA…DKDG, IDPL…DPAS, PLYH…PALK, PHTS…NPHD, ASLA…NGQD, LCCD…DIVQ, VKCL…QSRI, ASIC…LPTD, KVML…EQNH, ETAS…APDN, PGFN…STWG, EKSW…NKSC, KAYE…SHHA, and PAIG…HPDY.

Belongs to the TTC21 family. In terms of assembly, interacts with IFT20. Interacts with IFT52. Interacts with IFT140. Interacts with CEP78; regulating IFT20 stability and localization. As to expression, strongly expressed in testis.

Functionally, intraflagellar transport (IFT)-associated protein required for spermatogenesis. Required for sperm flagellar formation and intraflagellar transport. The chain is Tetratricopeptide repeat protein 21A from Homo sapiens (Human).